A 190-amino-acid polypeptide reads, in one-letter code: Zinc metalloproteinase/disintegrin (190 aa).

Residues 1–11 (NHNPECIVNEP) form the Peptidase M12B domain. One can recognise a Disintegrin domain in the interval 19 to 105 (PPVCGNELLE…ECPADVFHKN (87 aa)). V21, N24, L26, E28, E31, and D34 together coordinate Ca(2+). Intrachain disulfides connect C33/C51, C35/C46, C45/C68, C59/C65, C64/C90, and C77/C97. A D/ECD-tripeptide motif is present at residues 83 to 85 (ECD). Residues D85, P86, E88, D100, and V101 each contribute to the Ca(2+) site. A propeptide spanning residues 104-190 (KNGQPCLDNY…DNSPGQNGPC (87 aa)) is cleaved from the precursor.

The protein belongs to the venom metalloproteinase (M12B) family. P-III subfamily. As to quaternary structure, monomer. Zn(2+) is required as a cofactor. Expressed by the venom gland.

It is found in the secreted. Impairs hemostasis in the envenomed animal. Functionally, inhibits platelet aggregation induced by ADP, thrombin, platelet-activating factor and collagen. Acts by inhibiting fibrinogen interaction with platelet receptors GPIIb/GPIIIa (ITGA2B/ITGB3). This is Zinc metalloproteinase/disintegrin from Gloydius brevicauda (Korean slamosa snake).